Consider the following 214-residue polypeptide: tRNA (guanine-N(7)-)-methyltransferase (214 aa).

S-adenosyl-L-methionine contacts are provided by Glu43, Glu68, Asp95, and Asp117. Asp117 is a catalytic residue. Residues Lys121, Asp153, and 190-193 (TEYE) each bind substrate.

This sequence belongs to the class I-like SAM-binding methyltransferase superfamily. TrmB family.

The enzyme catalyses guanosine(46) in tRNA + S-adenosyl-L-methionine = N(7)-methylguanosine(46) in tRNA + S-adenosyl-L-homocysteine. It functions in the pathway tRNA modification; N(7)-methylguanine-tRNA biosynthesis. Functionally, catalyzes the formation of N(7)-methylguanine at position 46 (m7G46) in tRNA. The polypeptide is tRNA (guanine-N(7)-)-methyltransferase (Staphylococcus aureus (strain COL)).